The following is a 198-amino-acid chain: Alpha-S1-casein (198 aa).

Residues M1–A15 form the signal peptide. Disordered stretches follow at residues Q28 to E47 and S71 to H97. Phosphoserine occurs at positions 39, 80, 81, 83, 84, and 85.

This sequence belongs to the alpha-casein family. Mammary gland specific. Secreted in milk.

The protein localises to the secreted. Functionally, important role in the capacity of milk to transport calcium phosphate. In Cavia porcellus (Guinea pig), this protein is Alpha-S1-casein (CSN1S1).